A 256-amino-acid polypeptide reads, in one-letter code: Omega-amidase YafV (256 aa).

The CN hydrolase domain occupies 4-234 (LKITLLQQPL…ATRIDAELSM (231 aa)). Glutamate 42 (proton acceptor) is an active-site residue. Catalysis depends on lysine 107, which acts as the Proton donor. Residue cysteine 141 is the Nucleophile of the active site.

The protein belongs to the carbon-nitrogen hydrolase superfamily. NIT1/NIT2 family.

The enzyme catalyses a monoamide of a dicarboxylate + H2O = a dicarboxylate + NH4(+). Hydrolyzes alpha-ketoglutaramate (a-KGM) to alpha-ketoglutarate (alpha-KG) and ammonia, has weak activity on L-glutamine, almost no activity on deaminated glutathione (dGSH) and none on glutathione. May function as a metabolite repair enzyme. The chain is Omega-amidase YafV (yafV) from Escherichia coli (strain K12).